A 425-amino-acid polypeptide reads, in one-letter code: ATP-dependent RNA helicase eIF4A (425 aa).

Residues 38 to 66 carry the Q motif motif; it reads DTWEDYGLKEDLLKGIYSIGFETPSFIQK. Residues 69–241 enclose the Helicase ATP-binding domain; that stretch reads IQPIIDGRDI…EEILINPVII (173 aa). 82–89 serves as a coordination point for ATP; that stretch reads AQSGTGKT. Residues 187–190 carry the DEAD box motif; that stretch reads DEAD. Residues 252 to 425 enclose the Helicase C-terminal domain; that stretch reads GIRQYFIDLR…KELPADFSFQ (174 aa).

It belongs to the DEAD box helicase family. eIF4A subfamily. As to quaternary structure, component of the eIF4F complex, which composition varies with external and internal environmental conditions. It is composed of at least eIF4A, eIF4E and eIF4G.

It localises to the cytoplasm. The enzyme catalyses ATP + H2O = ADP + phosphate + H(+). In terms of biological role, ATP-dependent RNA helicase which is a subunit of the eIF4F complex involved in cap recognition and is required for mRNA binding to ribosome. In the current model of translation initiation, eIF4A unwinds RNA secondary structures in the 5'-UTR of mRNAs which is necessary to allow efficient binding of the small ribosomal subunit, and subsequent scanning for the initiator codon. In Encephalitozoon cuniculi (strain GB-M1) (Microsporidian parasite), this protein is ATP-dependent RNA helicase eIF4A (TIF1).